Here is a 176-residue protein sequence, read N- to C-terminus: Protein GrpE (176 aa).

The tract at residues 1 to 28 (MSEQKQEFENENAENSEHLQDENLQNIE) is disordered.

This sequence belongs to the GrpE family. As to quaternary structure, homodimer.

It is found in the cytoplasm. In terms of biological role, participates actively in the response to hyperosmotic and heat shock by preventing the aggregation of stress-denatured proteins, in association with DnaK and GrpE. It is the nucleotide exchange factor for DnaK and may function as a thermosensor. Unfolded proteins bind initially to DnaJ; upon interaction with the DnaJ-bound protein, DnaK hydrolyzes its bound ATP, resulting in the formation of a stable complex. GrpE releases ADP from DnaK; ATP binding to DnaK triggers the release of the substrate protein, thus completing the reaction cycle. Several rounds of ATP-dependent interactions between DnaJ, DnaK and GrpE are required for fully efficient folding. The chain is Protein GrpE from Campylobacter jejuni subsp. jejuni serotype O:2 (strain ATCC 700819 / NCTC 11168).